Here is a 1932-residue protein sequence, read N- to C-terminus: DOCK-like protein 1 (1932 aa).

In terms of domain architecture, DOCKER spans 1410–1824 (LLEANRPELF…EIERYSRTLS (415 aa)). A compositionally biased stretch (polar residues) spans 1908–1921 (STFLAGSQPNTNTD). The disordered stretch occupies residues 1908–1932 (STFLAGSQPNTNTDSQHKHDYSHSG). Basic and acidic residues predominate over residues 1922-1932 (SQHKHDYSHSG).

Belongs to the DOCK family. Forms an active heterodimer with LMO1.

The protein localises to the cytoplasm. The protein resides in the mitochondrion. Functionally, forms a transiant heterodimeric complex with LMO1, that acts as a guanine nucleotide exchange factor exchange factor (GEF) for the small GTPase RHO5. DCK1, LMO1 and RHO5 relocate to mitochondria upon oxidative stress and trigger cell death. The DCK1/LMO1/RHO5 signaling module mediates mitochondrial turnover under nitrogen starvation conditions via mitophagy. The DCK1/LMO1/RHO5 signaling module plays also a function in cell wall integrity signaling. The protein is DOCK-like protein 1 of Saccharomyces cerevisiae (strain ATCC 204508 / S288c) (Baker's yeast).